The primary structure comprises 163 residues: NADH-quinone oxidoreductase subunit I (163 aa).

4Fe-4S ferredoxin-type domains are found at residues 54 to 84 (LRRY…IESD) and 94 to 123 (TRYD…ETQI). 8 residues coordinate [4Fe-4S] cluster: Cys-64, Cys-67, Cys-70, Cys-74, Cys-103, Cys-106, Cys-109, and Cys-113.

This sequence belongs to the complex I 23 kDa subunit family. As to quaternary structure, NDH-1 is composed of 14 different subunits. Subunits NuoA, H, J, K, L, M, N constitute the membrane sector of the complex. The cofactor is [4Fe-4S] cluster.

It is found in the cell inner membrane. It catalyses the reaction a quinone + NADH + 5 H(+)(in) = a quinol + NAD(+) + 4 H(+)(out). NDH-1 shuttles electrons from NADH, via FMN and iron-sulfur (Fe-S) centers, to quinones in the respiratory chain. The immediate electron acceptor for the enzyme in this species is believed to be ubiquinone. Couples the redox reaction to proton translocation (for every two electrons transferred, four hydrogen ions are translocated across the cytoplasmic membrane), and thus conserves the redox energy in a proton gradient. The polypeptide is NADH-quinone oxidoreductase subunit I (Cupriavidus necator (strain ATCC 17699 / DSM 428 / KCTC 22496 / NCIMB 10442 / H16 / Stanier 337) (Ralstonia eutropha)).